A 163-amino-acid chain; its full sequence is CASP-like protein 1C3 (163 aa).

Residues 1–6 (MAKIKK) are Cytoplasmic-facing. The helical transmembrane segment at 7-27 (IFTNFLRLLALAATVVAIVFM) threads the bilayer. At 28-52 (VTSHDSAQVLNLTFTVKYSNTPVFK) the chain is on the extracellular side. N38 carries N-linked (GlcNAc...) asparagine glycosylation. The chain crosses the membrane as a helical span at residues 53–73 (YFVIAEAIAGGYIVISILLSF). Topologically, residues 74–79 (KSLFWR) are cytoplasmic. The chain crosses the membrane as a helical span at residues 80–100 (LLVILDMVTAVLLTSSISAAL). At 101 to 128 (AIAQVGKKGNTHAGWLPVCEQVPDFCDQ) the chain is on the extracellular side. The helical transmembrane segment at 129-149 (VTIALIAGFAAAIIYFVLLLC) threads the bilayer. Topologically, residues 150–163 (SLYVVLSPIFVVTP) are cytoplasmic.

It belongs to the Casparian strip membrane proteins (CASP) family. Homodimer and heterodimers.

It is found in the cell membrane. This chain is CASP-like protein 1C3, found in Populus trichocarpa (Western balsam poplar).